A 451-amino-acid chain; its full sequence is Cindoxin reductase (451 aa).

The FAD site is built by A24, E45, L53, and V89. NADP(+) is bound by residues 157–160 and 197–198; these read NGNV and RS. FAD is bound by residues W338 and 345–347; that span reads GGI. G345 provides a ligand contact to NADP(+).

This sequence belongs to the ferredoxin--NADP reductase type 1 family. FAD is required as a cofactor.

Its function is as follows. Involved in the degradation of cineol (eucalyptol). Catalyzes the reduction of cindoxin (CinC). This chain is Cindoxin reductase (cinB), found in Citrobacter braakii.